A 355-amino-acid chain; its full sequence is C-C chemokine receptor type 1 (355 aa).

Over 1–34 (METPNTTEDYDTTTEFDYGDATPCQKVNERAFGA) the chain is Extracellular. The N-linked (GlcNAc...) asparagine glycan is linked to Asn-5. 2 disulfides stabilise this stretch: Cys-24-Cys-273 and Cys-106-Cys-183. The chain crosses the membrane as a helical span at residues 35-60 (QLLPPLYSLVFVIGLVGNILVVLVLV). Topologically, residues 61 to 64 (QYKR) are cytoplasmic. A helical transmembrane segment spans residues 65–91 (LKNMTSIYLLNLAISDLLFLFTLPFWI). Topologically, residues 92–107 (DYKLKDDWVFGDAMCK) are extracellular. A helical transmembrane segment spans residues 108-129 (ILSGFYYTGLYSEIFFIILLTI). The Cytoplasmic segment spans residues 130 to 146 (DRYLAIVHAVFALRART). The chain crosses the membrane as a helical span at residues 147–171 (VTFGVITSIIIWALAILASMPGLYF). Residues 172-197 (SKTQWEFTHHTCSLHFPHESLREWKL) are Extracellular-facing. A helical membrane pass occupies residues 198–223 (FQALKLNLFGLVLPLLVMIICYTGII). The Cytoplasmic portion of the chain corresponds to 224–239 (KILLRRPNEKKSKAVR). Residues 240–264 (LIFVIMIIFFLFWTPYNLTILISVF) traverse the membrane as a helical segment. Residues 265-281 (QDFLFTHECEQSRHLDL) lie on the Extracellular side of the membrane. The helical transmembrane segment at 282–305 (AVQVTEVIAYTHCCVNPVIYAFVG) threads the bilayer. Residues 306–355 (ERFRKYLRQLFHRRVAVHLVKWLPFLSVDRLERVSSTSPSTGEHELSAGF) are Cytoplasmic-facing.

The protein belongs to the G-protein coupled receptor 1 family. Interacts with CREB3. Interacts with CCL3. Interacts with CCL15. Interacts with CCL23. Interacts with GNAI1. Interacts with PF4/CXCL4. As to expression, widely expressed in different hematopoietic cells.

It localises to the cell membrane. Its function is as follows. Chemokine receptor that plays a crucial role in regulating immune cell migration, inflammation, and immune responses. Contributes to the inflammatory response by recruiting immune cells, such as monocytes, macrophages, T-cells, and dendritic cells, to sites of inflammation for the clearance of pathogens and the resolution of tissue damage. When activated by its ligands including CCL3, CCL5-9, CCL13-16 and CCL23, triggers a signaling cascade within immune cells, leading to their migration towards the source of the chemokine. For example, mediates neutrophil migration after activation by CCL3 leading to the sequential release of TNF-alpha and leukotriene B4. Also mediates monocyte migration upon CXCL4 binding. Activation by CCL5 results in neuroinflammation through the ERK1/2 signaling pathway. In Homo sapiens (Human), this protein is C-C chemokine receptor type 1 (CCR1).